A 573-amino-acid polypeptide reads, in one-letter code: Maestro heat-like repeat-containing protein family member 9 (573 aa).

5 HEAT repeats span residues 118-155, 252-289, 292-328, 357-394, and 418-458; these read LYKLQILKEMLVWMSKDSSYLQERIMVIINKVLRFTVT, PLLTDFVQSLLMKLSSPDDKIASDAASILIFTLEFHAE, TMVSKIVDAIYRQLCDNNCMKDVMLQVITLLTCTSPK, SVAPHVLKTILLILKGKPGEMEDTVTEGKRFSLDITNL, and QYFP…LLNC.

This chain is Maestro heat-like repeat-containing protein family member 9 (MROH9), found in Homo sapiens (Human).